A 103-amino-acid polypeptide reads, in one-letter code: UPF0235 protein Rleg2_3707 (103 aa).

Belongs to the UPF0235 family.

The chain is UPF0235 protein Rleg2_3707 from Rhizobium leguminosarum bv. trifolii (strain WSM2304).